We begin with the raw amino-acid sequence, 377 residues long: DNA replication and repair protein RecF (377 aa).

ATP is bound at residue 30–37; sequence GLNGSGKT.

It belongs to the RecF family.

The protein resides in the cytoplasm. Its function is as follows. The RecF protein is involved in DNA metabolism; it is required for DNA replication and normal SOS inducibility. RecF binds preferentially to single-stranded, linear DNA. It also seems to bind ATP. This chain is DNA replication and repair protein RecF, found in Cytophaga hutchinsonii (strain ATCC 33406 / DSM 1761 / CIP 103989 / NBRC 15051 / NCIMB 9469 / D465).